Reading from the N-terminus, the 322-residue chain is Gluconeogenesis factor (322 aa).

The protein belongs to the gluconeogenesis factor family.

It localises to the cytoplasm. Its function is as follows. Required for morphogenesis under gluconeogenic growth conditions. The protein is Gluconeogenesis factor of Listeria monocytogenes serovar 1/2a (strain ATCC BAA-679 / EGD-e).